The following is a 439-amino-acid chain: MHKEETFNQCALTINGYKSEVKKTYELPGDKSVGHRSLLIGALPKGEYKIRNFPQSRDCLTTLKIMEELGVKVKVLKDYILVNSPGYENFKKKIDYIDCGNSGTTSRLIAGILAGVGVETNLVGDKSLSIRPMKRIVDPLNSMGANIEMEKDHMPLIFKGNGELKGIDYTMEIASAQVKSCILLAGFLSEGVTKVRELSPTRDHTERMLKYIEGNIKIENKEIEIENSTIKSKDIYVPGDISSAAYIIACAILGEDCEIILENVLLNENRRKYLDLLKKMGANLKYLEKNQCNGEHVGNILVKSSFLKGISIGKEITPYIIDEIPIISLIASFAEGKTIFENVEELKYKESDRIKAIMVNLKSLGVKTELVENNLIIYGGLSKINKEINIRTFNDHRIALTFLCSAMRNSEKTYIDNWDCVAISFPNSLNYFKDFFRIN.

Residues lysine 31, serine 32, and arginine 36 each coordinate 3-phosphoshikimate. Lysine 31 is a phosphoenolpyruvate binding site. Phosphoenolpyruvate contacts are provided by glycine 103 and arginine 131. Positions 175, 177, 322, and 349 each coordinate 3-phosphoshikimate. Glutamine 177 serves as a coordination point for phosphoenolpyruvate. The Proton acceptor role is filled by aspartate 322. Phosphoenolpyruvate-binding residues include arginine 353 and arginine 397.

The protein belongs to the EPSP synthase family. Monomer.

It localises to the cytoplasm. It carries out the reaction 3-phosphoshikimate + phosphoenolpyruvate = 5-O-(1-carboxyvinyl)-3-phosphoshikimate + phosphate. Its pathway is metabolic intermediate biosynthesis; chorismate biosynthesis; chorismate from D-erythrose 4-phosphate and phosphoenolpyruvate: step 6/7. In terms of biological role, catalyzes the transfer of the enolpyruvyl moiety of phosphoenolpyruvate (PEP) to the 5-hydroxyl of shikimate-3-phosphate (S3P) to produce enolpyruvyl shikimate-3-phosphate and inorganic phosphate. In Clostridium tetani (strain Massachusetts / E88), this protein is 3-phosphoshikimate 1-carboxyvinyltransferase.